A 293-amino-acid polypeptide reads, in one-letter code: MAAADFPVIIVTGLSGAGKSTVLNVLEDLRYFTVDGLPASLAPQMVTILNREALSHYQGLVLGMDLRESNFVRNLEKSLERLQGMGVRPAVVFIEATPAVLNRRYATTRRPHPLESEGMGLEQALEQERLRLAPVRETADLVVDTSSYSIHDLRRVIQKKWSSIQGRIRSLRINIVTFGFKYGVPADADLVFDLRFLPNPYFVPDLRPLSGLDEPVAKYVLEAGHGETFLAKLLDFLHFLLPQYEAEGRYRLTIAIGCTGGRHRSVSVAEALLRALKKSDYAVSIEHRHMELG.

ATP is bound at residue 13–20; that stretch reads GLSGAGKS. 65–68 serves as a coordination point for GTP; sequence DLRE.

This sequence belongs to the RapZ-like family.

Displays ATPase and GTPase activities. This is Nucleotide-binding protein DvMF_0424 from Nitratidesulfovibrio vulgaris (strain DSM 19637 / Miyazaki F) (Desulfovibrio vulgaris).